Reading from the N-terminus, the 118-residue chain is Thioredoxin H-type (118 aa).

The region spanning 2–114 (AAEEGQVIGC…LQQTIAKHMA (113 aa)) is the Thioredoxin domain. Catalysis depends on nucleophile residues cysteine 40 and cysteine 43. Cysteines 40 and 43 form a disulfide.

This sequence belongs to the thioredoxin family. Plant H-type subfamily.

It localises to the cytoplasm. In terms of biological role, participates in various redox reactions through the reversible oxidation of the active center dithiol to a disulfide. The H form is known to activate a number of cytosolic enzymes. This Ricinus communis (Castor bean) protein is Thioredoxin H-type.